Reading from the N-terminus, the 106-residue chain is Urease subunit beta (106 aa).

It belongs to the urease beta subunit family. Heterotrimer of UreA (gamma), UreB (beta) and UreC (alpha) subunits. Three heterotrimers associate to form the active enzyme.

Its subcellular location is the cytoplasm. The enzyme catalyses urea + 2 H2O + H(+) = hydrogencarbonate + 2 NH4(+). The protein operates within nitrogen metabolism; urea degradation; CO(2) and NH(3) from urea (urease route): step 1/1. The chain is Urease subunit beta from Klebsiella pneumoniae (strain 342).